A 271-amino-acid polypeptide reads, in one-letter code: Phosphate import ATP-binding protein PstB (271 aa).

The ABC transporter domain occupies Phe25–Ile266. ATP is bound at residue Gly57 to Ser64.

It belongs to the ABC transporter superfamily. Phosphate importer (TC 3.A.1.7) family. As to quaternary structure, the complex is composed of two ATP-binding proteins (PstB), two transmembrane proteins (PstC and PstA) and a solute-binding protein (PstS).

Its subcellular location is the cell membrane. It catalyses the reaction phosphate(out) + ATP + H2O = ADP + 2 phosphate(in) + H(+). Functionally, part of the ABC transporter complex PstSACB involved in phosphate import. Responsible for energy coupling to the transport system. The sequence is that of Phosphate import ATP-binding protein PstB from Bacillus anthracis.